The following is a 155-amino-acid chain: MSEQNNTEMTFQIQRIYTKDISFEAPNAPHVFQKDWQPEVKLDLDTASTQLADDVYEVVLRVTVTASLGEETAFLCEVQQGGIFSIAGIEGTQMAHCLGAYCPNILFPYARECITSMVSRGTFPQLNLAPVNFDALFMNYLQQQAGEGTEEHQDA.

The protein belongs to the SecB family. Homotetramer, a dimer of dimers. One homotetramer interacts with 1 SecA dimer.

It is found in the cytoplasm. One of the proteins required for the normal export of preproteins out of the cell cytoplasm. It is a molecular chaperone that binds to a subset of precursor proteins, maintaining them in a translocation-competent state. It also specifically binds to its receptor SecA. The polypeptide is Protein-export protein SecB (Escherichia coli O127:H6 (strain E2348/69 / EPEC)).